We begin with the raw amino-acid sequence, 190 residues long: Recombination protein RecR (190 aa).

The C4-type zinc finger occupies 58–73 (CEQCGALSENELCEIC). In terms of domain architecture, Toprim spans 81-167 (NILCIVESPK…TFSKIAQGIP (87 aa)).

Belongs to the RecR family.

Functionally, may play a role in DNA repair. It seems to be involved in an RecBC-independent recombinational process of DNA repair. It may act with RecF and RecO. The polypeptide is Recombination protein RecR (Campylobacter jejuni (strain RM1221)).